The chain runs to 319 residues: tRNA uridine(34) hydroxylase (319 aa).

Residues 127-221 (KQEDTVIIDA…YGKDPEVQGE (95 aa)) form the Rhodanese domain. The active-site Cysteine persulfide intermediate is C181.

It belongs to the TrhO family.

It catalyses the reaction uridine(34) in tRNA + AH2 + O2 = 5-hydroxyuridine(34) in tRNA + A + H2O. Its function is as follows. Catalyzes oxygen-dependent 5-hydroxyuridine (ho5U) modification at position 34 in tRNAs. In Bacillus mycoides (strain KBAB4) (Bacillus weihenstephanensis), this protein is tRNA uridine(34) hydroxylase.